A 306-amino-acid chain; its full sequence is D-alanine--D-alanine ligase (306 aa).

Catalysis depends on residues glutamate 15 and serine 150. Residues 101–303 (KLLWKSLSLR…FDELILKILK (203 aa)) enclose the ATP-grasp domain. 134-189 (ILKLKFPVVIKPNNAGSSIGITIVNHPDLLIDSINLAFNYSNNIIIEKFLKGTEYT) serves as a coordination point for ATP. Residues aspartate 257, glutamate 270, and asparagine 272 each contribute to the Mg(2+) site. Residue serine 281 is part of the active site.

This sequence belongs to the D-alanine--D-alanine ligase family. The cofactor is Mg(2+). Mn(2+) is required as a cofactor.

It is found in the cytoplasm. It catalyses the reaction 2 D-alanine + ATP = D-alanyl-D-alanine + ADP + phosphate + H(+). It participates in cell wall biogenesis; peptidoglycan biosynthesis. Functionally, cell wall formation. In Buchnera aphidicola subsp. Schizaphis graminum (strain Sg), this protein is D-alanine--D-alanine ligase.